A 308-amino-acid polypeptide reads, in one-letter code: uncharacterized protein (308 aa).

This is an uncharacterized protein from Bacillus subtilis (strain 168).